The chain runs to 77 residues: uncharacterized protein (77 aa).

This is an uncharacterized protein from Rickettsia prowazekii (strain Madrid E).